Reading from the N-terminus, the 569-residue chain is MSDQLADQLKATSLSSGPEDWKKGLNLPARDTRQQTEDVTNTRGLDWEDFIHDRDLLMGIFEAGFEKPSPIQEEAIPVALTGRDILARAKNGTGKTAAFVIPALNKINPKVSKIQCLILVPTRELAMQTSQVCKTLGKHLGINVMVTTGGTGLRDDIVRLQDPVHIVVGTPGRILDLAGKQVADLSECPMFIMDEADKLLSQEFTPVIEQLLQFHPKDRQVMLFSATFPLSVKDFSDKNMTSPYEINLMDELTLRGITQYYAFVEEKQKVHCLNTLFSKLQINQSIIFCNSTNRVELLAKKITELGYSCFYSHAKMAQQARNRVFHDFRNGVCRNLVCSDLLTRGIDIQAVNVVINFDFPKNAETYLHRIGRSGRYGHLGLAINLINWDDRFNLYNIERDLGTEIQPIPQTIDKSLYVYENPESIPRPISTFKPIAQQPQQQLQQSQRPQQSQQQQHFSTQTQPSNQLPPQQGNQQLGFNPQAQQPHRPIPQAQGDWQGQNGRQNGTGASNNQPRPTNYQNNRGQPGSSRGGRGRGFQGQGGRQNQNYGGQRGPRTQGQGQPQGPLSAQ.

Positions 1–16 are enriched in polar residues; it reads MSDQLADQLKATSLSS. A disordered region spans residues 1–39; sequence MSDQLADQLKATSLSSGPEDWKKGLNLPARDTRQQTEDV. The Q motif signature appears at 45–73; the sequence is LDWEDFIHDRDLLMGIFEAGFEKPSPIQE. Residues 76–246 form the Helicase ATP-binding domain; that stretch reads IPVALTGRDI…DKNMTSPYEI (171 aa). Residue 89–96 participates in ATP binding; sequence AKNGTGKT. Positions 194–197 match the DEAD box motif; it reads DEAD. Residues 256 to 416 enclose the Helicase C-terminal domain; sequence GITQYYAFVE…PIPQTIDKSL (161 aa). A disordered region spans residues 436-569; that stretch reads AQQPQQQLQQ…GQPQGPLSAQ (134 aa). The span at 437–482 shows a compositional bias: low complexity; it reads QQPQQQLQQSQRPQQSQQQQHFSTQTQPSNQLPPQQGNQQLGFNPQ. Positions 495–520 are enriched in polar residues; it reads GDWQGQNGRQNGTGASNNQPRPTNYQ. The span at 529–542 shows a compositional bias: gly residues; it reads SRGGRGRGFQGQGG. The segment covering 543–569 has biased composition (low complexity); sequence RQNQNYGGQRGPRTQGQGQPQGPLSAQ.

Belongs to the DEAD box helicase family. DDX6/DHH1 subfamily.

The protein localises to the cytoplasm. Its subcellular location is the P-body. The catalysed reaction is ATP + H2O = ADP + phosphate + H(+). In terms of biological role, ATP-dependent RNA helicase involved in mRNA turnover, and more specifically in mRNA decapping. Is involved in G1/S DNA-damage checkpoint recovery, probably through the regulation of the translational status of a subset of mRNAs. May also have a role in translation and mRNA nuclear export. In Neurospora crassa (strain ATCC 24698 / 74-OR23-1A / CBS 708.71 / DSM 1257 / FGSC 987), this protein is ATP-dependent RNA helicase dhh1 (drh-10).